Consider the following 508-residue polypeptide: Glycogen synthase (508 aa).

K27 is a binding site for ADP-alpha-D-glucose.

The protein belongs to the glycosyltransferase 1 family. Bacterial/plant glycogen synthase subfamily.

The enzyme catalyses [(1-&gt;4)-alpha-D-glucosyl](n) + ADP-alpha-D-glucose = [(1-&gt;4)-alpha-D-glucosyl](n+1) + ADP + H(+). It functions in the pathway glycan biosynthesis; glycogen biosynthesis. Functionally, synthesizes alpha-1,4-glucan chains using ADP-glucose. This Photobacterium profundum (strain SS9) protein is Glycogen synthase.